Here is a 492-residue protein sequence, read N- to C-terminus: Argininosuccinate lyase (492 aa).

It belongs to the lyase 1 family. Argininosuccinate lyase subfamily.

It is found in the cytoplasm. It carries out the reaction 2-(N(omega)-L-arginino)succinate = fumarate + L-arginine. The protein operates within amino-acid biosynthesis; L-arginine biosynthesis; L-arginine from L-ornithine and carbamoyl phosphate: step 3/3. The sequence is that of Argininosuccinate lyase from Methanoculleus marisnigri (strain ATCC 35101 / DSM 1498 / JR1).